The primary structure comprises 229 residues: Heptaprenylglyceryl phosphate synthase (229 aa).

Lys-12 serves as a coordination point for sn-glycerol 1-phosphate. Residues Asp-14 and Ser-40 each contribute to the Mg(2+) site. Residues 159 to 164 (YLEYSG), Gly-189, and 209 to 210 (GN) contribute to the sn-glycerol 1-phosphate site.

Belongs to the GGGP/HepGP synthase family. Group I subfamily. In terms of assembly, homodimer. It depends on Mg(2+) as a cofactor.

The catalysed reaction is sn-glycerol 1-phosphate + all-trans-heptaprenyl diphosphate = 3-heptaprenyl-sn-glycero-1-phosphate + diphosphate. It functions in the pathway membrane lipid metabolism; glycerophospholipid metabolism. Prenyltransferase that catalyzes in vivo the transfer of the heptaprenyl moiety of heptaprenyl pyrophosphate (HepPP; 35 carbon atoms) to the C3 hydroxyl of sn-glycerol-1-phosphate (G1P), producing heptaprenylglyceryl phosphate (HepGP). This reaction is an ether-bond-formation step in the biosynthesis of archaea-type G1P-based membrane lipids found in Bacillales. The protein is Heptaprenylglyceryl phosphate synthase of Bacillus cereus (strain AH187).